We begin with the raw amino-acid sequence, 496 residues long: Cobyric acid synthase (496 aa).

Positions Asp-255–Trp-445 constitute a GATase cobBQ-type domain. Cys-336 (nucleophile) is an active-site residue. His-437 is an active-site residue.

It belongs to the CobB/CobQ family. CobQ subfamily.

The protein operates within cofactor biosynthesis; adenosylcobalamin biosynthesis. Its function is as follows. Catalyzes amidations at positions B, D, E, and G on adenosylcobyrinic A,C-diamide. NH(2) groups are provided by glutamine, and one molecule of ATP is hydrogenolyzed for each amidation. The chain is Cobyric acid synthase from Parasynechococcus marenigrum (strain WH8102).